We begin with the raw amino-acid sequence, 192 residues long: Transmembrane protein 11, mitochondrial (192 aa).

The interval 1–20 (MAAWGRRRLGPGSSGGSARE) is disordered. The next 2 membrane-spanning stretches (helical) occupy residues 84–100 (TAVLAGTACLFTPLALP) and 107–124 (ISLPAGVLSLACCTLYGI).

It belongs to the TMEM11 family. As to quaternary structure, associates with the mitochondrial contact site and cristae organizing system (MICOS) complex, composed of at least MICOS10/MIC10, CHCHD3/MIC19, CHCHD6/MIC25, APOOL/MIC27, IMMT/MIC60, APOO/MIC23/MIC26 and QIL1/MIC13. This complex was also known under the names MINOS or MitOS complex. The MICOS complex associates with mitochondrial outer membrane proteins SAMM50, MTX1, MTX2 and DNAJC11, mitochondrial inner membrane protein TMEM11 and with HSPA9. Interacts with IMMT/MIC60.

It is found in the mitochondrion inner membrane. Functionally, plays a role in mitochondrial morphogenesis. This Homo sapiens (Human) protein is Transmembrane protein 11, mitochondrial (TMEM11).